The following is a 318-amino-acid chain: Ribosomal RNA small subunit methyltransferase H (318 aa).

Residues 37–39 (GGH), Asp-57, Phe-83, Asp-104, and Gln-111 each bind S-adenosyl-L-methionine.

It belongs to the methyltransferase superfamily. RsmH family.

It is found in the cytoplasm. It catalyses the reaction cytidine(1402) in 16S rRNA + S-adenosyl-L-methionine = N(4)-methylcytidine(1402) in 16S rRNA + S-adenosyl-L-homocysteine + H(+). Functionally, specifically methylates the N4 position of cytidine in position 1402 (C1402) of 16S rRNA. This chain is Ribosomal RNA small subunit methyltransferase H, found in Neisseria gonorrhoeae (strain ATCC 700825 / FA 1090).